The chain runs to 395 residues: Succinyl-diaminopimelate desuccinylase (395 aa).

H74 is a Zn(2+) binding site. The active site involves D76. D107 lines the Zn(2+) pocket. E141 acts as the Proton acceptor in catalysis. Residues E142, E170, and H368 each contribute to the Zn(2+) site.

This sequence belongs to the peptidase M20A family. DapE subfamily. Homodimer. The cofactor is Zn(2+). It depends on Co(2+) as a cofactor.

It catalyses the reaction N-succinyl-(2S,6S)-2,6-diaminopimelate + H2O = (2S,6S)-2,6-diaminopimelate + succinate. Its pathway is amino-acid biosynthesis; L-lysine biosynthesis via DAP pathway; LL-2,6-diaminopimelate from (S)-tetrahydrodipicolinate (succinylase route): step 3/3. Catalyzes the hydrolysis of N-succinyl-L,L-diaminopimelic acid (SDAP), forming succinate and LL-2,6-diaminopimelate (DAP), an intermediate involved in the bacterial biosynthesis of lysine and meso-diaminopimelic acid, an essential component of bacterial cell walls. This chain is Succinyl-diaminopimelate desuccinylase, found in Brucella anthropi (strain ATCC 49188 / DSM 6882 / CCUG 24695 / JCM 21032 / LMG 3331 / NBRC 15819 / NCTC 12168 / Alc 37) (Ochrobactrum anthropi).